A 325-amino-acid polypeptide reads, in one-letter code: Holliday junction branch migration complex subunit RuvB (325 aa).

The large ATPase domain (RuvB-L) stretch occupies residues 1 to 172; it reads MENNELLDIT…FGVVFRLEFY (172 aa). Residues Leu11, Arg12, Gly53, Lys56, Thr57, Thr58, 119 to 121, Arg162, Tyr172, and Arg209 contribute to the ATP site; that span reads EDF. Thr57 contributes to the Mg(2+) binding site. The segment at 173–243 is small ATPAse domain (RuvB-S); the sequence is NSEELKEIVK…IAQEALIAMD (71 aa). A head domain (RuvB-H) region spans residues 246–325; sequence DYGLDDMDRK…LKRKIPERLF (80 aa). Residues Arg301 and Arg306 each contribute to the DNA site.

Belongs to the RuvB family. As to quaternary structure, homohexamer. Forms an RuvA(8)-RuvB(12)-Holliday junction (HJ) complex. HJ DNA is sandwiched between 2 RuvA tetramers; dsDNA enters through RuvA and exits via RuvB. An RuvB hexamer assembles on each DNA strand where it exits the tetramer. Each RuvB hexamer is contacted by two RuvA subunits (via domain III) on 2 adjacent RuvB subunits; this complex drives branch migration. In the full resolvosome a probable DNA-RuvA(4)-RuvB(12)-RuvC(2) complex forms which resolves the HJ.

The protein localises to the cytoplasm. It carries out the reaction ATP + H2O = ADP + phosphate + H(+). Its function is as follows. The RuvA-RuvB-RuvC complex processes Holliday junction (HJ) DNA during genetic recombination and DNA repair, while the RuvA-RuvB complex plays an important role in the rescue of blocked DNA replication forks via replication fork reversal (RFR). RuvA specifically binds to HJ cruciform DNA, conferring on it an open structure. The RuvB hexamer acts as an ATP-dependent pump, pulling dsDNA into and through the RuvAB complex. RuvB forms 2 homohexamers on either side of HJ DNA bound by 1 or 2 RuvA tetramers; 4 subunits per hexamer contact DNA at a time. Coordinated motions by a converter formed by DNA-disengaged RuvB subunits stimulates ATP hydrolysis and nucleotide exchange. Immobilization of the converter enables RuvB to convert the ATP-contained energy into a lever motion, pulling 2 nucleotides of DNA out of the RuvA tetramer per ATP hydrolyzed, thus driving DNA branch migration. The RuvB motors rotate together with the DNA substrate, which together with the progressing nucleotide cycle form the mechanistic basis for DNA recombination by continuous HJ branch migration. Branch migration allows RuvC to scan DNA until it finds its consensus sequence, where it cleaves and resolves cruciform DNA. This Thermodesulfovibrio yellowstonii (strain ATCC 51303 / DSM 11347 / YP87) protein is Holliday junction branch migration complex subunit RuvB.